A 260-amino-acid polypeptide reads, in one-letter code: Global transcriptional regulator CodY (260 aa).

The segment at 1-159 (MPNLLEKTRK…SSTVVGIQLL (159 aa)) is GAF domain. The H-T-H motif DNA-binding region spans 207–226 (ASVIADRIGITRSVIVNALR).

Belongs to the CodY family.

The protein localises to the cytoplasm. In terms of biological role, DNA-binding global transcriptional regulator which is involved in the adaptive response to starvation and acts by directly or indirectly controlling the expression of numerous genes in response to nutrient availability. During rapid exponential growth, CodY is highly active and represses genes whose products allow adaptation to nutrient depletion. In Streptococcus pyogenes serotype M4 (strain MGAS10750), this protein is Global transcriptional regulator CodY.